The chain runs to 156 residues: Small ribosomal subunit protein uS7 (156 aa).

This sequence belongs to the universal ribosomal protein uS7 family. As to quaternary structure, part of the 30S ribosomal subunit. Contacts proteins S9 and S11.

In terms of biological role, one of the primary rRNA binding proteins, it binds directly to 16S rRNA where it nucleates assembly of the head domain of the 30S subunit. Is located at the subunit interface close to the decoding center, probably blocks exit of the E-site tRNA. This chain is Small ribosomal subunit protein uS7, found in Shewanella amazonensis (strain ATCC BAA-1098 / SB2B).